Reading from the N-terminus, the 466-residue chain is L-seryl-tRNA(Sec) selenium transferase (466 aa).

Lys-294 carries the post-translational modification N6-(pyridoxal phosphate)lysine.

Belongs to the SelA family. It depends on pyridoxal 5'-phosphate as a cofactor.

The protein localises to the cytoplasm. The catalysed reaction is L-seryl-tRNA(Sec) + selenophosphate + H(+) = L-selenocysteinyl-tRNA(Sec) + phosphate. Its pathway is aminoacyl-tRNA biosynthesis; selenocysteinyl-tRNA(Sec) biosynthesis; selenocysteinyl-tRNA(Sec) from L-seryl-tRNA(Sec) (bacterial route): step 1/1. In terms of biological role, converts seryl-tRNA(Sec) to selenocysteinyl-tRNA(Sec) required for selenoprotein biosynthesis. This Carboxydothermus hydrogenoformans (strain ATCC BAA-161 / DSM 6008 / Z-2901) protein is L-seryl-tRNA(Sec) selenium transferase.